The chain runs to 63 residues: Large ribosomal subunit protein eL37 (63 aa).

The Zn(2+) site is built by C20, C23, C35, and C38. The C4-type zinc-finger motif lies at 20 to 38 (CRRCGRHSFNVRKGYCVAC).

It belongs to the eukaryotic ribosomal protein eL37 family. It depends on Zn(2+) as a cofactor.

Functionally, binds to the 23S rRNA. In Ignicoccus hospitalis (strain KIN4/I / DSM 18386 / JCM 14125), this protein is Large ribosomal subunit protein eL37.